We begin with the raw amino-acid sequence, 331 residues long: GTP 3',8-cyclase (331 aa).

Positions 9-233 (PFGRRITYLR…VRSSKVTGGP (225 aa)) constitute a Radical SAM core domain. GTP is bound at residue arginine 18. Positions 25 and 29 each coordinate [4Fe-4S] cluster. Tyrosine 31 is a binding site for S-adenosyl-L-methionine. Position 32 (cysteine 32) interacts with [4Fe-4S] cluster. Arginine 67 contributes to the GTP binding site. Residue glycine 71 participates in S-adenosyl-L-methionine binding. Position 98 (threonine 98) interacts with GTP. Serine 122 is an S-adenosyl-L-methionine binding site. Lysine 159 is a binding site for GTP. Position 193 (methionine 193) interacts with S-adenosyl-L-methionine. Residues cysteine 257 and cysteine 260 each coordinate [4Fe-4S] cluster. 262–264 (RVR) is a GTP binding site. Cysteine 274 contributes to the [4Fe-4S] cluster binding site.

The protein belongs to the radical SAM superfamily. MoaA family. In terms of assembly, monomer and homodimer. [4Fe-4S] cluster serves as cofactor.

It carries out the reaction GTP + AH2 + S-adenosyl-L-methionine = (8S)-3',8-cyclo-7,8-dihydroguanosine 5'-triphosphate + 5'-deoxyadenosine + L-methionine + A + H(+). Its pathway is cofactor biosynthesis; molybdopterin biosynthesis. Functionally, catalyzes the cyclization of GTP to (8S)-3',8-cyclo-7,8-dihydroguanosine 5'-triphosphate. This Ectopseudomonas mendocina (strain ymp) (Pseudomonas mendocina) protein is GTP 3',8-cyclase.